A 617-amino-acid chain; its full sequence is Autophagy-related protein 20 (617 aa).

A disordered region spans residues 1–83 (MWNDEDNNPY…KRKPGGYDSR (83 aa)). Positions 20 to 31 (QSSSINPTSPST) are enriched in low complexity. Residues 48–58 (DNEHNHGVIHD) are compositionally biased toward basic and acidic residues. Acidic residues predominate over residues 59 to 68 (DSDDDDEDLT). Residues 89 to 209 (YENPKLSILI…RFFDPNASWS (121 aa)) form the PX domain. A 1,2-diacyl-sn-glycero-3-phospho-(1D-myo-inositol-3-phosphate) contacts are provided by arginine 126, serine 128, lysine 152, and arginine 175. Positions 403-440 (QQDLTTEELSKKRALLDQLEQSEAEARRIENYLSSSQQ) form a coiled coil. Residues 434-516 (YLSSSQQISP…SGNSITNKIF (83 aa)) form a disordered region. Residues 454 to 463 (PPSHQRRDGS) are compositionally biased toward basic and acidic residues. The span at 480–500 (DFSSHTPSASQGLPERSTSVP) shows a compositional bias: polar residues.

It belongs to the sorting nexin family. As to quaternary structure, forms a complex with SNX4/ATG24 and ATG17.

Its subcellular location is the endosome membrane. It is found in the preautophagosomal structure membrane. Functionally, required for cytoplasm to vacuole transport (Cvt), pexophagy and mitophagy. Also involved in endoplasmic reticulum-specific autophagic process and is essential for the survival of cells subjected to severe ER stress. Functions in protein retrieval from the endocytic pathway. Required for proper sorting of the v-SNARE protein SNC1. Autophagy is required for proper vegetative growth, asexual/sexual reproduction, and full virulence. Autophagy is particularly involved in the biosynthesis of deoxynivalenol (DON), an important virulence determinant. This Gibberella zeae (strain ATCC MYA-4620 / CBS 123657 / FGSC 9075 / NRRL 31084 / PH-1) (Wheat head blight fungus) protein is Autophagy-related protein 20.